The primary structure comprises 163 residues: Putative 4-hydroxy-4-methyl-2-oxoglutarate aldolase (163 aa).

Residues 76–79 and R98 contribute to the substrate site; that span reads GDMI. Residue D99 participates in a divalent metal cation binding.

This sequence belongs to the class II aldolase/RraA-like family. In terms of assembly, homotrimer. Requires a divalent metal cation as cofactor.

It catalyses the reaction 4-hydroxy-4-methyl-2-oxoglutarate = 2 pyruvate. The enzyme catalyses oxaloacetate + H(+) = pyruvate + CO2. Catalyzes the aldol cleavage of 4-hydroxy-4-methyl-2-oxoglutarate (HMG) into 2 molecules of pyruvate. Also contains a secondary oxaloacetate (OAA) decarboxylase activity due to the common pyruvate enolate transition state formed following C-C bond cleavage in the retro-aldol and decarboxylation reactions. The chain is Putative 4-hydroxy-4-methyl-2-oxoglutarate aldolase from Pseudomonas fluorescens.